A 316-amino-acid chain; its full sequence is Methionyl-tRNA formyltransferase (316 aa).

111-114 contributes to the (6S)-5,6,7,8-tetrahydrofolate binding site; that stretch reads GLLP.

It belongs to the Fmt family.

It catalyses the reaction L-methionyl-tRNA(fMet) + (6R)-10-formyltetrahydrofolate = N-formyl-L-methionyl-tRNA(fMet) + (6S)-5,6,7,8-tetrahydrofolate + H(+). In terms of biological role, attaches a formyl group to the free amino group of methionyl-tRNA(fMet). The formyl group appears to play a dual role in the initiator identity of N-formylmethionyl-tRNA by promoting its recognition by IF2 and preventing the misappropriation of this tRNA by the elongation apparatus. The chain is Methionyl-tRNA formyltransferase from Chlamydia trachomatis serovar A (strain ATCC VR-571B / DSM 19440 / HAR-13).